We begin with the raw amino-acid sequence, 121 residues long: Small ribosomal subunit protein uS13 (121 aa).

A disordered region spans residues 97–121; sequence PVRGQKTHSNARTRKGPRASRIKKK. Over residues 101–121 the composition is skewed to basic residues; sequence QKTHSNARTRKGPRASRIKKK.

The protein belongs to the universal ribosomal protein uS13 family. Part of the 30S ribosomal subunit. Forms a loose heterodimer with protein S19. Forms two bridges to the 50S subunit in the 70S ribosome.

Located at the top of the head of the 30S subunit, it contacts several helices of the 16S rRNA. In the 70S ribosome it contacts the 23S rRNA (bridge B1a) and protein L5 of the 50S subunit (bridge B1b), connecting the 2 subunits; these bridges are implicated in subunit movement. Contacts the tRNAs in the A and P-sites. This chain is Small ribosomal subunit protein uS13, found in Kosmotoga olearia (strain ATCC BAA-1733 / DSM 21960 / TBF 19.5.1).